Consider the following 548-residue polypeptide: CTP synthase (548 aa).

The amidoligase domain stretch occupies residues 1 to 270; that stretch reads MTKYVFVTGG…DNIVCEALGL (270 aa). Residue Ser-13 participates in CTP binding. Ser-13 serves as a coordination point for UTP. Residues 14–19 and Asp-71 each bind ATP; that span reads SLGKGI. Mg(2+) contacts are provided by Asp-71 and Glu-144. Residues 151–153, 191–196, and Lys-227 each bind CTP; these read DIE and KTKPTQ. Residues 191-196 and Lys-227 contribute to the UTP site; that span reads KTKPTQ. The Glutamine amidotransferase type-1 domain maps to 295-545; the sequence is TIGMVGKYVD…IEAAIANHAR (251 aa). Gly-356 serves as a coordination point for L-glutamine. Cys-383 acts as the Nucleophile; for glutamine hydrolysis in catalysis. Residues 384–387, Glu-407, and Arg-473 contribute to the L-glutamine site; that span reads LGMQ. Active-site residues include His-518 and Glu-520.

The protein belongs to the CTP synthase family. In terms of assembly, homotetramer.

The enzyme catalyses UTP + L-glutamine + ATP + H2O = CTP + L-glutamate + ADP + phosphate + 2 H(+). It catalyses the reaction L-glutamine + H2O = L-glutamate + NH4(+). It carries out the reaction UTP + NH4(+) + ATP = CTP + ADP + phosphate + 2 H(+). Its pathway is pyrimidine metabolism; CTP biosynthesis via de novo pathway; CTP from UDP: step 2/2. Its activity is regulated as follows. Allosterically activated by GTP, when glutamine is the substrate; GTP has no effect on the reaction when ammonia is the substrate. The allosteric effector GTP functions by stabilizing the protein conformation that binds the tetrahedral intermediate(s) formed during glutamine hydrolysis. Inhibited by the product CTP, via allosteric rather than competitive inhibition. Functionally, catalyzes the ATP-dependent amination of UTP to CTP with either L-glutamine or ammonia as the source of nitrogen. Regulates intracellular CTP levels through interactions with the four ribonucleotide triphosphates. The protein is CTP synthase of Bordetella petrii (strain ATCC BAA-461 / DSM 12804 / CCUG 43448).